The sequence spans 162 residues: 2-C-methyl-D-erythritol 2,4-cyclodiphosphate synthase (162 aa).

2 residues coordinate a divalent metal cation: Asp10 and His12. Residues 10-12 (DVH) and 36-37 (HS) each bind 4-CDP-2-C-methyl-D-erythritol 2-phosphate. Residue His44 participates in a divalent metal cation binding. Residues 58 to 60 (DIG), 63 to 67 (FPDTD), and Arg144 contribute to the 4-CDP-2-C-methyl-D-erythritol 2-phosphate site.

This sequence belongs to the IspF family. Homotrimer. A divalent metal cation serves as cofactor.

It carries out the reaction 4-CDP-2-C-methyl-D-erythritol 2-phosphate = 2-C-methyl-D-erythritol 2,4-cyclic diphosphate + CMP. Its pathway is isoprenoid biosynthesis; isopentenyl diphosphate biosynthesis via DXP pathway; isopentenyl diphosphate from 1-deoxy-D-xylulose 5-phosphate: step 4/6. Its function is as follows. Involved in the biosynthesis of isopentenyl diphosphate (IPP) and dimethylallyl diphosphate (DMAPP), two major building blocks of isoprenoid compounds. Catalyzes the conversion of 4-diphosphocytidyl-2-C-methyl-D-erythritol 2-phosphate (CDP-ME2P) to 2-C-methyl-D-erythritol 2,4-cyclodiphosphate (ME-CPP) with a corresponding release of cytidine 5-monophosphate (CMP). This is 2-C-methyl-D-erythritol 2,4-cyclodiphosphate synthase from Laribacter hongkongensis (strain HLHK9).